Here is a 661-residue protein sequence, read N- to C-terminus: UvrABC system protein B (661 aa).

Positions 25–182 (AGLNSKKRSQ…SDLVNLQYER (158 aa)) constitute a Helicase ATP-binding domain. Residue 38-45 (GITGSGKT) participates in ATP binding. The Beta-hairpin motif lies at 91-114 (YYDYYQPEAYIARTDTFIEKDSSI). A Helicase C-terminal domain is found at 430 to 592 (QVEDLISEIQ…IIPQTINRTI (163 aa)). One can recognise a UVR domain in the interval 621 to 656 (KAHIYKLKKAMLKAASNLEFEQATKLRDQLKNLEEA).

It belongs to the UvrB family. Forms a heterotetramer with UvrA during the search for lesions. Interacts with UvrC in an incision complex.

The protein resides in the cytoplasm. Functionally, the UvrABC repair system catalyzes the recognition and processing of DNA lesions. A damage recognition complex composed of 2 UvrA and 2 UvrB subunits scans DNA for abnormalities. Upon binding of the UvrA(2)B(2) complex to a putative damaged site, the DNA wraps around one UvrB monomer. DNA wrap is dependent on ATP binding by UvrB and probably causes local melting of the DNA helix, facilitating insertion of UvrB beta-hairpin between the DNA strands. Then UvrB probes one DNA strand for the presence of a lesion. If a lesion is found the UvrA subunits dissociate and the UvrB-DNA preincision complex is formed. This complex is subsequently bound by UvrC and the second UvrB is released. If no lesion is found, the DNA wraps around the other UvrB subunit that will check the other stand for damage. The polypeptide is UvrABC system protein B (Rickettsia canadensis (strain McKiel)).